Here is a 159-residue protein sequence, read N- to C-terminus: Heavy metal-associated isoprenylated plant protein 28 (159 aa).

The HMA domain occupies 10-73 (LQTIEMRVHM…KVRKTGRRAE (64 aa)). The a metal cation site is built by Cys21 and Cys24. Residue Cys156 is modified to Cysteine methyl ester. Cys156 carries S-farnesyl cysteine lipidation. A propeptide spans 157-159 (SIM) (removed in mature form).

The protein belongs to the HIPP family.

Functionally, heavy-metal-binding protein. This Arabidopsis thaliana (Mouse-ear cress) protein is Heavy metal-associated isoprenylated plant protein 28.